The primary structure comprises 662 residues: Transketolase (662 aa).

His28 contacts substrate. Residues His68 and 115 to 117 (GPL) each bind thiamine diphosphate. Asp156 contacts Mg(2+). Thiamine diphosphate contacts are provided by Gly157 and Asn186. Mg(2+) contacts are provided by Asn186 and Ile188. Substrate is bound by residues His261, Arg356, and Ser383. His261 lines the thiamine diphosphate pocket. Residue Glu410 is the Proton donor of the active site. Phe436 contributes to the thiamine diphosphate binding site. Residues His460, Asp468, and Arg519 each contribute to the substrate site.

The protein belongs to the transketolase family. Homodimer. It depends on Mg(2+) as a cofactor. Ca(2+) is required as a cofactor. The cofactor is Mn(2+). Co(2+) serves as cofactor. Requires thiamine diphosphate as cofactor.

It catalyses the reaction D-sedoheptulose 7-phosphate + D-glyceraldehyde 3-phosphate = aldehydo-D-ribose 5-phosphate + D-xylulose 5-phosphate. Its pathway is carbohydrate biosynthesis; Calvin cycle. It functions in the pathway carbohydrate degradation; pentose phosphate pathway. Functionally, catalyzes the transfer of a two-carbon ketol group from a ketose donor to an aldose acceptor, via a covalent intermediate with the cofactor thiamine pyrophosphate. The sequence is that of Transketolase (tkt) from Staphylococcus aureus (strain MRSA252).